A 308-amino-acid polypeptide reads, in one-letter code: Elongation factor Ts (308 aa).

The interval 80–83 (TDFV) is involved in Mg(2+) ion dislocation from EF-Tu.

This sequence belongs to the EF-Ts family.

It is found in the cytoplasm. Its function is as follows. Associates with the EF-Tu.GDP complex and induces the exchange of GDP to GTP. It remains bound to the aminoacyl-tRNA.EF-Tu.GTP complex up to the GTP hydrolysis stage on the ribosome. The polypeptide is Elongation factor Ts (Parvibaculum lavamentivorans (strain DS-1 / DSM 13023 / NCIMB 13966)).